The chain runs to 346 residues: Transposase for insertion sequence element IS1533 (346 aa).

The protein belongs to the transposase IS1111A/IS1328/IS1533 family.

In terms of biological role, required for the transposition of the insertion element. In Leptospira borgpetersenii, this protein is Transposase for insertion sequence element IS1533 (tnhA).